Here is a 514-residue protein sequence, read N- to C-terminus: Mitochondrial-processing peptidase subunit alpha (514 aa).

The transit peptide at 1-55 (MLLRKSIPYIKICRDISASVRNNKEIAQKLPLSVPLPMENNSKSIEKGCPPMGRN) directs the protein to the mitochondrion.

This sequence belongs to the peptidase M16 family. Heterodimer of mppa-1 (alpha) and mppb-1 (beta) subunits, forming the mitochondrial processing protease (MPP) in which mppa-1 is involved in substrate recognition and binding and mppb-1 is the catalytic subunit.

It is found in the mitochondrion matrix. Functionally, substrate recognition and binding subunit of the essential mitochondrial processing protease (MPP), which cleaves the mitochondrial sequence off newly imported precursors proteins. The polypeptide is Mitochondrial-processing peptidase subunit alpha (Caenorhabditis elegans).